The following is a 124-amino-acid chain: WAP four-disulfide core domain protein 2 (124 aa).

The N-terminal stretch at 1-27 (MPACRPGPLAGALLLGLLLLGLPRVPG) is a signal peptide. WAP domains are found at residues 29–73 (EVEK…CHLP) and 74–123 (NEKE…VTPI). Disulfide bonds link Cys36–Cys62, Cys45–Cys66, Cys49–Cys61, Cys55–Cys70, Cys80–Cys110, Cys93–Cys114, Cys97–Cys109, and Cys103–Cys119. An N-linked (GlcNAc...) asparagine glycan is attached at Asn44.

Homotrimer; disulfide-linked. Epididymis. Highest levels are found in the caput and proximal cauda regions. Lower levels in the distal cauda. Not detected in the efferent ducts.

The protein resides in the secreted. Functionally, broad range protease inhibitor. Possible function in sperm maturation. This chain is WAP four-disulfide core domain protein 2 (WFDC2), found in Canis lupus familiaris (Dog).